The sequence spans 422 residues: Serine hydroxymethyltransferase (422 aa).

Residues Leu-113 and 117 to 119 (GHL) each bind (6S)-5,6,7,8-tetrahydrofolate. Lys-222 is subject to N6-(pyridoxal phosphate)lysine.

This sequence belongs to the SHMT family. In terms of assembly, homodimer. Requires pyridoxal 5'-phosphate as cofactor.

It is found in the cytoplasm. The catalysed reaction is (6R)-5,10-methylene-5,6,7,8-tetrahydrofolate + glycine + H2O = (6S)-5,6,7,8-tetrahydrofolate + L-serine. The protein operates within one-carbon metabolism; tetrahydrofolate interconversion. Its pathway is amino-acid biosynthesis; glycine biosynthesis; glycine from L-serine: step 1/1. Its function is as follows. Catalyzes the reversible interconversion of serine and glycine with tetrahydrofolate (THF) serving as the one-carbon carrier. This reaction serves as the major source of one-carbon groups required for the biosynthesis of purines, thymidylate, methionine, and other important biomolecules. Also exhibits THF-independent aldolase activity toward beta-hydroxyamino acids, producing glycine and aldehydes, via a retro-aldol mechanism. The sequence is that of Serine hydroxymethyltransferase from Amoebophilus asiaticus (strain 5a2).